A 380-amino-acid polypeptide reads, in one-letter code: MSCPYAGNGNEHDDSAVPLSNEIGKIYGEYLMLDKVLDAQCMLSKEDKRPVHDEHLFIITHQAYELWFKQIIFEFDSIRDMLNAEVIDETKTLEIVKRLNRVVLILKLLVDQVPILETMTPLDFMDFRKYLAPASGFQSMQFRLIENKLGVLTEQRVKYNQKYSDVFGNDAQALNAIRNSEIEPSLLELVQRWLERTPGLEEDGFNFWQKFQQSVDQFLDAQVQSAMEEPVEQAKNYRLMDIEKRREVYRSIFDTAVHEALVKRGDRRFSHRALQGAIMITFYRDEPRFSQPHQLLTLLMDIDSLITKWRYNHVIMVQRMIGSQQLGTGGSSGYQYLRSTLSDRYKVFLDLFNLSTFLIPREAIPPLDESIRKKLINKSV.

Substrate contacts are provided by residues 57-61 (FIITH) and Arg-128. His-313 is a heme binding site. Thr-328 contributes to the substrate binding site.

This sequence belongs to the tryptophan 2,3-dioxygenase family. Homotetramer. Dimer of dimers. Heme is required as a cofactor.

It carries out the reaction L-tryptophan + O2 = N-formyl-L-kynurenine. The protein operates within amino-acid degradation; L-tryptophan degradation via kynurenine pathway; L-kynurenine from L-tryptophan: step 1/2. It participates in pigment biosynthesis; ommochrome biosynthesis. Heme-dependent dioxygenase that catalyzes the oxidative cleavage of the L-tryptophan (L-Trp) pyrrole ring and converts L-tryptophan to N-formyl-L-kynurenine. Catalyzes the oxidative cleavage of the indole moiety. This Drosophila willistoni (Fruit fly) protein is Tryptophan 2,3-dioxygenase.